The chain runs to 577 residues: 2-succinyl-5-enolpyruvyl-6-hydroxy-3-cyclohexene-1-carboxylate synthase (577 aa).

The protein belongs to the TPP enzyme family. MenD subfamily. Homodimer. Requires Mg(2+) as cofactor. Mn(2+) is required as a cofactor. Thiamine diphosphate serves as cofactor.

It catalyses the reaction isochorismate + 2-oxoglutarate + H(+) = 5-enolpyruvoyl-6-hydroxy-2-succinyl-cyclohex-3-ene-1-carboxylate + CO2. Its pathway is quinol/quinone metabolism; 1,4-dihydroxy-2-naphthoate biosynthesis; 1,4-dihydroxy-2-naphthoate from chorismate: step 2/7. It participates in cofactor biosynthesis; phylloquinone biosynthesis. Catalyzes the thiamine diphosphate-dependent decarboxylation of 2-oxoglutarate and the subsequent addition of the resulting succinic semialdehyde-thiamine pyrophosphate anion to isochorismate to yield 2-succinyl-5-enolpyruvyl-6-hydroxy-3-cyclohexene-1-carboxylate (SEPHCHC). The protein is 2-succinyl-5-enolpyruvyl-6-hydroxy-3-cyclohexene-1-carboxylate synthase of Synechococcus sp. (strain CC9311).